A 159-amino-acid polypeptide reads, in one-letter code: TAPVPACFLCLLALSSACYIQNCPRGGKRSYPDTAVRQCIPCGPGNRGNCFGPNICCGEDLGCYVGTPETLRCVEETYLPSPCEAGGKPCSSGGRCAAPGVCCSDDTCVVDSSCLDEDSERRRVTPEQNMTQMDGSASDLLLRLMHMANRQQQSKHQFY.

The signal sequence occupies residues 1–17 (TAPVPACFLCLLALSSA). A disulfide bridge connects residues Cys-18 and Cys-23. Position 26 is a glycine amide (Gly-26). Intrachain disulfides connect Cys-39–Cys-83, Cys-42–Cys-56, Cys-50–Cys-73, Cys-57–Cys-63, Cys-90–Cys-102, Cys-96–Cys-114, and Cys-103–Cys-108. Residue Asn-129 is glycosylated (N-linked (GlcNAc...) asparagine).

The protein belongs to the vasopressin/oxytocin family. In terms of processing, seven disulfide bonds are present in neurophysin.

It is found in the secreted. Functionally, vasotocin is an antidiuretic hormone. In Bufo japonicus (Japanese common toad), this protein is Vasotocin-neurophysin VT.